The chain runs to 253 residues: Discoidin-1 subunit A (253 aa).

Ser2 carries the post-translational modification N-acetylserine. Residues Ser2–Gln152 form the F5/8 type C domain. The Cell attachment site signature appears at Arg79–Asp81.

As to quaternary structure, tetramer of four different chains (A to D). In terms of tissue distribution, stalk cells.

It is found in the cytoplasm. Its function is as follows. Galactose- and N-acetylgalactosamine-binding lectin. May play a role in cell-substratum adhesion rather than in cell-cell adhesion. May be necessary for the maintenance of normal elongate morphology during aggregation. This is Discoidin-1 subunit A (dscA-1) from Dictyostelium discoideum (Social amoeba).